Consider the following 79-residue polypeptide: Defensin-like protein 109 (79 aa).

Positions 1-24 are cleaved as a signal peptide; it reads MDFTKKILVVFAFTIMLGISSVHC. 4 cysteine pairs are disulfide-bonded: cysteine 41–cysteine 76, cysteine 47–cysteine 68, cysteine 54–cysteine 74, and cysteine 58–cysteine 75.

The protein belongs to the DEFL family.

Its subcellular location is the secreted. This chain is Defensin-like protein 109, found in Arabidopsis thaliana (Mouse-ear cress).